Reading from the N-terminus, the 136-residue chain is UPF0310 protein HH_1062 (136 aa).

This sequence belongs to the UPF0310 family.

The protein is UPF0310 protein HH_1062 of Helicobacter hepaticus (strain ATCC 51449 / 3B1).